The chain runs to 100 residues: Large ribosomal subunit protein uL23 (100 aa).

Belongs to the universal ribosomal protein uL23 family. As to quaternary structure, part of the 50S ribosomal subunit. Contacts protein L29, and trigger factor when it is bound to the ribosome.

Its function is as follows. One of the early assembly proteins it binds 23S rRNA. One of the proteins that surrounds the polypeptide exit tunnel on the outside of the ribosome. Forms the main docking site for trigger factor binding to the ribosome. This Sodalis glossinidius (strain morsitans) protein is Large ribosomal subunit protein uL23.